The sequence spans 165 residues: uncharacterized protein (165 aa).

A helical membrane pass occupies residues 16–36 (ASISSILNFFFFYIMEYFVAV).

This sequence belongs to the asfivirus F165R family.

It is found in the host membrane. This is an uncharacterized protein from African swine fever virus (strain Badajoz 1971 Vero-adapted) (Ba71V).